Here is a 126-residue protein sequence, read N- to C-terminus: MSGRGKGAGKARAKAKSRSARAGLQFPVGRVHRFLRKGNYAQRVGAGAPVYLAAVLEYLAAEILELAGNAARDNKKTRIIPRHLQLAVRNDEELNKLLSGVTIAQGGVLPNIQAVLLPKKTSKASK.

The interval 1 to 20 (MSGRGKGAGKARAKAKSRSA) is disordered. Position 2 is an N-acetylserine (serine 2). Serine 2 is modified (phosphoserine). A compositionally biased stretch (basic residues) spans 7 to 19 (GAGKARAKAKSRS). An N5-methylglutamine modification is found at glutamine 105. Residue lysine 120 forms a Glycyl lysine isopeptide (Lys-Gly) (interchain with G-Cter in ubiquitin) linkage.

This sequence belongs to the histone H2A family. In terms of assembly, the nucleosome is a histone octamer containing two molecules each of H2A, H2B, H3 and H4 assembled in one H3-H4 heterotetramer and two H2A-H2B heterodimers. The octamer wraps approximately 147 bp of DNA. In terms of processing, monoubiquitination of Lys-120 gives a specific tag for epigenetic transcriptional repression. Post-translationally, phosphorylation of Ser-2 directly represses transcription.

Its subcellular location is the nucleus. It is found in the chromosome. Core component of nucleosome. Nucleosomes wrap and compact DNA into chromatin, limiting DNA accessibility to the cellular machineries which require DNA as a template. Histones thereby play a central role in transcription regulation, DNA repair, DNA replication and chromosomal stability. DNA accessibility is regulated via a complex set of post-translational modifications of histones, also called histone code, and nucleosome remodeling. This chain is Late histone H2A.L3, found in Strongylocentrotus purpuratus (Purple sea urchin).